The following is a 432-amino-acid chain: D-amino acid dehydrogenase (432 aa).

3–17 (VLVLGGGVIGVTSAY) provides a ligand contact to FAD.

The protein belongs to the DadA oxidoreductase family. It depends on FAD as a cofactor.

It catalyses the reaction a D-alpha-amino acid + A + H2O = a 2-oxocarboxylate + AH2 + NH4(+). It functions in the pathway amino-acid degradation; D-alanine degradation; NH(3) and pyruvate from D-alanine: step 1/1. Oxidative deamination of D-amino acids. This Delftia acidovorans (strain DSM 14801 / SPH-1) protein is D-amino acid dehydrogenase.